Here is a 494-residue protein sequence, read N- to C-terminus: GTPase Der (494 aa).

EngA-type G domains lie at 3 to 166 (PVIA…MDAE) and 207 to 380 (IKLA…DCST). GTP-binding positions include 9-16 (GRPNVGKS), 56-60 (DTGGI), 118-121 (NKTD), 213-220 (GRPNVGKS), 260-264 (DTAGV), and 325-328 (NKWD). A KH-like domain is found at 381 to 465 (KRVGTSLLTR…PIRIQFKEGE (85 aa)).

It belongs to the TRAFAC class TrmE-Era-EngA-EngB-Septin-like GTPase superfamily. EngA (Der) GTPase family. As to quaternary structure, associates with the 50S ribosomal subunit.

GTPase that plays an essential role in the late steps of ribosome biogenesis. The polypeptide is GTPase Der (Yersinia enterocolitica serotype O:8 / biotype 1B (strain NCTC 13174 / 8081)).